The primary structure comprises 319 residues: Pectinesterase (319 aa).

Position 1 is a pyrrolidone carboxylic acid (Q1). The substrate site is built by T83 and Q113. The active-site Proton donor is the D136. Cysteines 150 and 170 form a disulfide. D157 acts as the Nucleophile in catalysis. Residues R225 and W227 each coordinate substrate.

It belongs to the pectinesterase family.

It localises to the secreted. Its subcellular location is the cell wall. It catalyses the reaction [(1-&gt;4)-alpha-D-galacturonosyl methyl ester](n) + n H2O = [(1-&gt;4)-alpha-D-galacturonosyl](n) + n methanol + n H(+). It functions in the pathway glycan metabolism; pectin degradation; 2-dehydro-3-deoxy-D-gluconate from pectin: step 1/5. Functionally, catalyzes the deesterification of methyl-esterified D-galactosiduronic acid units in pectic compounds. It participates in modulating cell wall during fruit ripening, cell wall extension during pollen germination, and in defense mechanisms against pathogens. The protein is Pectinesterase of Daucus carota (Wild carrot).